We begin with the raw amino-acid sequence, 240 residues long: UDP-2,3-diacylglucosamine hydrolase (240 aa).

Mn(2+) contacts are provided by Asp7, His9, Asp40, Asn78, and His113. 78–79 (NR) lines the substrate pocket. Substrate-binding residues include Asp121, Ser159, Thr163, Lys166, and His194. His194 and His196 together coordinate Mn(2+).

The protein belongs to the LpxH family. Mn(2+) serves as cofactor.

It is found in the cell inner membrane. The enzyme catalyses UDP-2-N,3-O-bis[(3R)-3-hydroxytetradecanoyl]-alpha-D-glucosamine + H2O = 2-N,3-O-bis[(3R)-3-hydroxytetradecanoyl]-alpha-D-glucosaminyl 1-phosphate + UMP + 2 H(+). It functions in the pathway glycolipid biosynthesis; lipid IV(A) biosynthesis; lipid IV(A) from (3R)-3-hydroxytetradecanoyl-[acyl-carrier-protein] and UDP-N-acetyl-alpha-D-glucosamine: step 4/6. Its function is as follows. Hydrolyzes the pyrophosphate bond of UDP-2,3-diacylglucosamine to yield 2,3-diacylglucosamine 1-phosphate (lipid X) and UMP by catalyzing the attack of water at the alpha-P atom. Involved in the biosynthesis of lipid A, a phosphorylated glycolipid that anchors the lipopolysaccharide to the outer membrane of the cell. The protein is UDP-2,3-diacylglucosamine hydrolase of Pseudomonas entomophila (strain L48).